Reading from the N-terminus, the 453-residue chain is MQVTETLSEGLKHEFKISVPASDLDAKAGAKLVDLKDKVRINGFRPGKVPVAHLKKVYGRSVMAETIDQTIRDTNTQLFSERGFRLATEPKITMPSEQAEVEELLSGKTDLTYTVAIEVVPSIALADFKTFQVEKPVADVTDADVDEAIKRIADTNRGYAAKADGAKAESGDRVTINFKGTINGEVFEGGTGEGIQVVIGSNTFIPGFEEQLTGIGAGETRTLKVSFPKNYMNDKLAGQPAEFETTATSIEAPQDIAIDDEFAKTLGLESLDKLKEAARERLVAEFAGATRQRVKRALLDRLDEAHRFEAPPSLVDEEFNLMWNSVKAEMDSAGKTFADEDTTEDAAKEEYRKIADRRVRLGLVLSEIGEKNKITVTDDEVGRAVIERARQMPGREKEVWDYYRSNAQALAQLRAPIYEDKVVDFILELANVTEKKVSREDLYKDDEAEKTAA.

The PPIase FKBP-type domain occupies 171–256 (GDRVTINFKG…ATSIEAPQDI (86 aa)).

The protein belongs to the FKBP-type PPIase family. Tig subfamily.

Its subcellular location is the cytoplasm. The enzyme catalyses [protein]-peptidylproline (omega=180) = [protein]-peptidylproline (omega=0). Functionally, involved in protein export. Acts as a chaperone by maintaining the newly synthesized protein in an open conformation. Functions as a peptidyl-prolyl cis-trans isomerase. The protein is Trigger factor of Bradyrhizobium diazoefficiens (strain JCM 10833 / BCRC 13528 / IAM 13628 / NBRC 14792 / USDA 110).